A 612-amino-acid polypeptide reads, in one-letter code: Chaperone protein DnaK (612 aa).

Thr-173 carries the post-translational modification Phosphothreonine; by autocatalysis. Positions 524–544 (DDKVSEEDKQKAESAKDELKQ) are enriched in basic and acidic residues. Disordered stretches follow at residues 524-560 (DDKVSEEDKQKAESAKDELKQALESGDMEQVKAKKDA) and 572-612 (LYEQ…DDKK). Residues 574 to 586 (EQVQQEAQQASGE) are compositionally biased toward low complexity. Residues 587–612 (QGEESGNQDDDVVDADYSEVDDDDKK) show a composition bias toward acidic residues.

This sequence belongs to the heat shock protein 70 family.

In terms of biological role, acts as a chaperone. This Oceanobacillus iheyensis (strain DSM 14371 / CIP 107618 / JCM 11309 / KCTC 3954 / HTE831) protein is Chaperone protein DnaK.